Here is a 290-residue protein sequence, read N- to C-terminus: Protoheme IX farnesyltransferase (290 aa).

9 helical membrane-spanning segments follow: residues 8 to 28 (LTKPGIIMGNLISVLAGYFLA), 36 to 56 (LSLLVYTMLGVALVIASGCVV), 81 to 101 (INIEFAFLFAIIMLLIGTGLL), 108 to 128 (LSAVMVLLGYVFYVFFYTMWY), 133 to 153 (VYGTLVGSVSGAIPPLVGYLA), 163 to 183 (VLLFGLFCLWQMPHSYAIAMF), 209 to 229 (IMIYVLVFSVVALGLYAFGHT), 230 to 247 (GYEYLAVVAISCYGWFKV), and 270 to 290 (LAITAFSTVLGIELLPFSITF).

It belongs to the UbiA prenyltransferase family. Protoheme IX farnesyltransferase subfamily.

It is found in the cell inner membrane. The enzyme catalyses heme b + (2E,6E)-farnesyl diphosphate + H2O = Fe(II)-heme o + diphosphate. The protein operates within porphyrin-containing compound metabolism; heme O biosynthesis; heme O from protoheme: step 1/1. Converts heme B (protoheme IX) to heme O by substitution of the vinyl group on carbon 2 of heme B porphyrin ring with a hydroxyethyl farnesyl side group. This Aliivibrio salmonicida (strain LFI1238) (Vibrio salmonicida (strain LFI1238)) protein is Protoheme IX farnesyltransferase.